The sequence spans 510 residues: NAD(P)H-quinone oxidoreductase subunit 2 B, chloroplastic (510 aa).

12 helical membrane passes run 24–44, 59–79, 99–119, 124–144, 149–169, 183–203, 229–249, 295–315, 323–343, 354–374, 395–415, and 418–438; these read LLLFQGSSIFPECILIFGLIL, WFYFISSTSLVISITALLFRW, IFQFLILLCSTLCIPLSVEYI, MAITEFLLFVLTATLGGMFLC, LITIFVAPECFSLCSYLLSGY, YLLMGGASSSILVHGFSWLYG, ISIALISITVGLGFKLSPAPF, WHLLLEILAILSMILGNLLAI, MLAYSSIGQIGYVIIGIIVGD, YMLFYISMNLGTFACIVLFGL, ALSLALCLLSLGGLPPLAGFF, and LYLFWCGWQAGLYLLVSIGLL.

It belongs to the complex I subunit 2 family. As to quaternary structure, NDH is composed of at least 16 different subunits, 5 of which are encoded in the nucleus.

The protein resides in the plastid. It is found in the chloroplast thylakoid membrane. The enzyme catalyses a plastoquinone + NADH + (n+1) H(+)(in) = a plastoquinol + NAD(+) + n H(+)(out). It catalyses the reaction a plastoquinone + NADPH + (n+1) H(+)(in) = a plastoquinol + NADP(+) + n H(+)(out). Its function is as follows. NDH shuttles electrons from NAD(P)H:plastoquinone, via FMN and iron-sulfur (Fe-S) centers, to quinones in the photosynthetic chain and possibly in a chloroplast respiratory chain. The immediate electron acceptor for the enzyme in this species is believed to be plastoquinone. Couples the redox reaction to proton translocation, and thus conserves the redox energy in a proton gradient. This chain is NAD(P)H-quinone oxidoreductase subunit 2 B, chloroplastic, found in Agrostis stolonifera (Creeping bentgrass).